Reading from the N-terminus, the 243-residue chain is Orotidine 5'-phosphate decarboxylase (243 aa).

Substrate contacts are provided by residues D19, K41, 69–78 (DLKFFDIPAT), T124, R185, Q194, G214, and R215. Catalysis depends on K71, which acts as the Proton donor.

It belongs to the OMP decarboxylase family. Type 1 subfamily. Homodimer.

The catalysed reaction is orotidine 5'-phosphate + H(+) = UMP + CO2. It functions in the pathway pyrimidine metabolism; UMP biosynthesis via de novo pathway; UMP from orotate: step 2/2. Its function is as follows. Catalyzes the decarboxylation of orotidine 5'-monophosphate (OMP) to uridine 5'-monophosphate (UMP). This Xanthomonas euvesicatoria pv. vesicatoria (strain 85-10) (Xanthomonas campestris pv. vesicatoria) protein is Orotidine 5'-phosphate decarboxylase.